We begin with the raw amino-acid sequence, 497 residues long: Guanosine-5'-triphosphate,3'-diphosphate pyrophosphatase (497 aa).

This sequence belongs to the GppA/Ppx family. GppA subfamily.

It carries out the reaction guanosine 3'-diphosphate 5'-triphosphate + H2O = guanosine 3',5'-bis(diphosphate) + phosphate + H(+). The protein operates within purine metabolism; ppGpp biosynthesis; ppGpp from GTP: step 2/2. In terms of biological role, catalyzes the conversion of pppGpp to ppGpp. Guanosine pentaphosphate (pppGpp) is a cytoplasmic signaling molecule which together with ppGpp controls the 'stringent response', an adaptive process that allows bacteria to respond to amino acid starvation, resulting in the coordinated regulation of numerous cellular activities. The polypeptide is Guanosine-5'-triphosphate,3'-diphosphate pyrophosphatase (Vibrio campbellii (strain ATCC BAA-1116)).